The primary structure comprises 2169 residues: Protein sidekick-1 (2169 aa).

The first 50 residues, 1–50 (MVGRKVDREIIARRNSRRDGMMMKLNFCFFFCRRWWAFLLLQLHMLQALA), serve as a signal peptide directing secretion. At 51–1961 (QDDVAPYFKT…TEAPFYEEWW (1911 aa)) the chain is on the extracellular side. 5 consecutive Ig-like C2-type domains span residues 56–138 (PYFK…SEVQ), 143–229 (GNFM…SPLI), 245–333 (PIIV…AFIS), 338–428 (PYFT…LDVT), and 432–521 (PAFI…VMLT). C78 and C121 are oxidised to a cystine. N-linked (GlcNAc...) asparagine glycosylation is found at N93, N223, and N253. Intrachain disulfides connect C267/C314, C360/C410, and C453/C505. N-linked (GlcNAc...) asparagine glycosylation is found at N502, N524, and N534. Residues 525 to 615 (RTFIVHPPEN…GNDSRMARLE (91 aa)) form the Ig-like C2-type 6 domain. A disulfide bridge links C547 with C599. N-linked (GlcNAc...) asparagine glycosylation is found at N607, N631, N734, N773, N834, N967, and N977. Fibronectin type-III domains follow at residues 622 to 718 (SPQN…LPEE), 723 to 819 (PPKN…TLQG), 824 to 922 (PPQN…TLED), 926 to 1020 (AVGH…VPPE), 1024 to 1123 (APSN…TLQA), 1128 to 1226 (APGS…TRES), 1231 to 1328 (PPEN…TKDD), 1332 to 1426 (PPIR…TEKR), 1431 to 1528 (PPQQ…TLQD), 1533 to 1651 (PPSS…VGEA), 1656 to 1752 (APQN…THQA), 1756 to 1851 (APSF…AGPA), and 1854 to 1955 (SPGS…TEAP). Residues N1234 and N1285 are each glycosylated (N-linked (GlcNAc...) asparagine). The interval 1423–1443 (TEKRERPAPPQQLTTPQSDVS) is disordered. The span at 1433–1443 (QQLTTPQSDVS) shows a compositional bias: polar residues. Residues N1606, N1700, N1719, N1771, and N1845 are each glycosylated (N-linked (GlcNAc...) asparagine). Residues 1962-1982 (FLLVMALSSLILILLVVFALV) form a helical membrane-spanning segment. At 1983–2169 (LHGQSKKYKN…TPVTGFSSFV (187 aa)) the chain is on the cytoplasmic side. Disordered regions lie at residues 2028 to 2050 (TFSKKNGTRSPPRPSPGGLHYSD) and 2145 to 2169 (GGVYTPTGQPAPGSRTPVTGFSSFV). The span at 2160–2169 (TPVTGFSSFV) shows a compositional bias: polar residues. The PDZ-binding signature appears at 2163–2169 (TGFSSFV).

This sequence belongs to the sidekick family. As to quaternary structure, homodimer; mediates homophilic interactions to promote cell adhesion. As to expression, expressed by non-overlapping subsets of retinal neurons. SDK1, SDK2, DSCAM and DSCAML1 are expressed in non-overlapping subsets of interneurons and retinal ganglion cells (RGCs) that form synapses in distinct inner plexiform layer (IPL) sublaminae.

The protein resides in the cell membrane. It is found in the synapse. Its function is as follows. Adhesion molecule that promotes lamina-specific synaptic connections in the retina. Expressed in specific subsets of interneurons and retinal ganglion cells (RGCs) and promotes synaptic connectivity via homophilic interactions. The chain is Protein sidekick-1 from Gallus gallus (Chicken).